The following is a 155-amino-acid chain: Glutamyl-tRNA(Gln) amidotransferase subunit C, chloroplastic/mitochondrial (155 aa).

The N-terminal 52 residues, M1–Y52, are a transit peptide targeting the chloroplast and mitochondrion.

It belongs to the GatC family. Subunit of the heterotrimeric GatCAB amidotransferase (AdT) complex, composed of A, B and C subunits.

The protein localises to the mitochondrion. It localises to the plastid. The protein resides in the chloroplast. The catalysed reaction is L-glutamyl-tRNA(Gln) + L-glutamine + ATP + H2O = L-glutaminyl-tRNA(Gln) + L-glutamate + ADP + phosphate + H(+). Allows the formation of correctly charged Gln-tRNA(Gln) through the transamidation of misacylated Glu-tRNA(Gln) in chloroplasts and mitochondria. The reaction takes place in the presence of glutamine and ATP through an activated gamma-phospho-Glu-tRNA(Gln). The protein is Glutamyl-tRNA(Gln) amidotransferase subunit C, chloroplastic/mitochondrial of Arabidopsis thaliana (Mouse-ear cress).